Here is a 181-residue protein sequence, read N- to C-terminus: UPF0302 protein lmo1921 (181 aa).

It belongs to the UPF0302 family.

In Listeria monocytogenes serovar 1/2a (strain ATCC BAA-679 / EGD-e), this protein is UPF0302 protein lmo1921.